We begin with the raw amino-acid sequence, 300 residues long: MGDKIVRATAANGGIRLVAVLTTDSSMEAKERHGLSYLTTSILGRAFSASLLLASSMKVMHGRVTLRVRSDGPLKGLLVDAGRDGKVRGYVGNPNLELDLVKTKQNQYSFDFTKALGTGYLNVIRDNGFGEPFTSTVELVNGNIAEDLASYLYHSEQTPSAVFIGEKIQNKNIISSGGLLAQVLPKKETDPLLVSLLEERCKEINSFSEDLFKSKDNLLSLIKNIFPDIDDKSISEKARTQEVRFECRCSRQRSLNAMKMLDKNELKDILIKEGKAELVCEFCKNKYLINSEEIKEMIKN.

Disulfide bonds link cysteine 247–cysteine 249 and cysteine 280–cysteine 283.

This sequence belongs to the HSP33 family. Post-translationally, under oxidizing conditions two disulfide bonds are formed involving the reactive cysteines. Under reducing conditions zinc is bound to the reactive cysteines and the protein is inactive.

The protein resides in the cytoplasm. Redox regulated molecular chaperone. Protects both thermally unfolding and oxidatively damaged proteins from irreversible aggregation. Plays an important role in the bacterial defense system toward oxidative stress. The protein is 33 kDa chaperonin of Prochlorococcus marinus subsp. pastoris (strain CCMP1986 / NIES-2087 / MED4).